A 203-amino-acid polypeptide reads, in one-letter code: Outer-membrane lipoprotein carrier protein (203 aa).

Residues 1-21 (MKKLIISCCLLATFSAAGAWA) form the signal peptide. The segment at 174–203 (ALKSQQSGPISADKFKFRPPKGVTVDDQRQ) is disordered.

This sequence belongs to the LolA family. Monomer.

It is found in the periplasm. Functionally, participates in the translocation of lipoproteins from the inner membrane to the outer membrane. Only forms a complex with a lipoprotein if the residue after the N-terminal Cys is not an aspartate (The Asp acts as a targeting signal to indicate that the lipoprotein should stay in the inner membrane). The sequence is that of Outer-membrane lipoprotein carrier protein from Erwinia tasmaniensis (strain DSM 17950 / CFBP 7177 / CIP 109463 / NCPPB 4357 / Et1/99).